A 333-amino-acid polypeptide reads, in one-letter code: MGMKRNRPRRGSLAFSPRKRAKRPVPKIRSWPERETVKLLAFPVYKAGTTHALYKENNPKSPNADQDVFTPVTVMEAPDITIAGIRAYGKDTKGLKALTEVWADSFDKELGRKINLPKEPKANTEKLDEVADKIVEVRAIVHTNPKDTNLPKKKPEIIEIKIGGKNISDIIAYAKDIIGKKLSINDVFTGGEFIDTVAITKGKGFQGPVKRWGIKIQFGKHQNKGVGRHTGSIGPWTPKRIMWTVPMAGQVGFHQRTEYNKRILKIGENGSEIVPKGGFLNYGVVKNNYVLVKGSVQGPAKRMVVLREAIRNPEDKFGLPELTYVSTESKQGN.

Composition is skewed to basic residues over residues 1-10 (MGMKRNRPRR) and 17-26 (PRKRAKRPVP). Positions 1–29 (MGMKRNRPRRGSLAFSPRKRAKRPVPKIR) are disordered.

The protein belongs to the universal ribosomal protein uL3 family. In terms of assembly, part of the 50S ribosomal subunit. Forms a cluster with proteins L14 and L24e.

One of the primary rRNA binding proteins, it binds directly near the 3'-end of the 23S rRNA, where it nucleates assembly of the 50S subunit. This chain is Large ribosomal subunit protein uL3, found in Methanococcus aeolicus (strain ATCC BAA-1280 / DSM 17508 / OCM 812 / Nankai-3).